We begin with the raw amino-acid sequence, 226 residues long: Transmembrane protein 204 (226 aa).

The Cytoplasmic segment spans residues 1–5 (MTVRK). Residues 6 to 26 (VVATAVLVALVSLVLNNAAAF) traverse the membrane as a helical segment. The Extracellular segment spans residues 27 to 103 (TPNWVYQTLE…LQFDMMRACN (77 aa)). The helical transmembrane segment at 104 to 124 (LVATAALAAGQLTFVLGLTGL) threads the bilayer. Residues 125–136 (PLLSPDAQCWEE) are Cytoplasmic-facing. A helical membrane pass occupies residues 137–157 (AMAAAFQLASFVLVIGLVTFY). Residues 158 to 170 (RIGPYTSLSWSCY) are Extracellular-facing. A helical membrane pass occupies residues 171 to 191 (LNIGACLLATLAAAMLIWNVL). Topologically, residues 192–226 (HRREDCTAPRVIVISRSLTARFRRGLDNDYVESPC) are cytoplasmic.

It is found in the cell junction. Its subcellular location is the adherens junction. The protein resides in the cell membrane. Its function is as follows. Can influence paracellular permeability. Appears to be involved in cell-cell interactions through adherens. This Bos taurus (Bovine) protein is Transmembrane protein 204 (TMEM204).